The primary structure comprises 287 residues: Protease HtpX (287 aa).

2 consecutive transmembrane segments (helical) span residues 4-24 and 33-53; these read IFLLIATNLAVLLVASIVMSI and GGLLVFAAIFGFGGAFISLAI. His-139 is a binding site for Zn(2+). Residue Glu-140 is part of the active site. Position 143 (His-143) interacts with Zn(2+). A run of 2 helical transmembrane segments spans residues 154–174 and 195–215; these read LIQGVVNTFVIFAARVVAGII and AVVFVLDMLFGILASIIVAYF. Glu-220 lines the Zn(2+) pocket.

Belongs to the peptidase M48B family. The cofactor is Zn(2+).

The protein localises to the cell inner membrane. The protein is Protease HtpX of Shewanella sp. (strain MR-4).